Reading from the N-terminus, the 201-residue chain is MBF complex negative regulatory component yox1 (201 aa).

Positions 1 to 22 (MSLSDSPSKSGNTGKDLISNNE) are enriched in polar residues. The disordered stretch occupies residues 1-42 (MSLSDSPSKSGNTGKDLISNNEAKNHEDEETHQKKRRRRTTD). Positions 23-32 (AKNHEDEETH) are enriched in basic and acidic residues. The homeobox DNA-binding region spans 33–92 (QKKRRRRTTDAEATLLEQYFLKTPKPSLIERQELSKKLKSSMTPRELQIWFQNKRQSLRR).

Component of the MBF transcription factor complex. Phosphorylated in response to hydroxyurea. Phosphorylation inhibits the repressor activity and is dependent on rad3. However, the regulation of yox1 by rad3 is probably indirect.

The protein localises to the nucleus. Its function is as follows. Negative regulatory component of the MBF transcription factor complex involved in cell-cycle G1/S phase-specific gene expression and more particularly DNA replication checkpoint-dependent gene expression. The sequence is that of MBF complex negative regulatory component yox1 (yox1) from Schizosaccharomyces pombe (strain 972 / ATCC 24843) (Fission yeast).